Reading from the N-terminus, the 882-residue chain is Probable LRR receptor-like serine/threonine-protein kinase At1g12460 (882 aa).

Positions 1-21 (MRKVHLFLVLVHFIYISTSRS) are cleaved as a signal peptide. Over 22-515 (DSISERDILL…SRNSDALSIS (494 aa)) the chain is Extracellular. N-linked (GlcNAc...) asparagine glycosylation is present at asparagine 76. LRR repeat units lie at residues 92–113 (FIRV…DYFK), 116–138 (TLWT…ISEL), 140–162 (SLRF…LFKF), 165–187 (KTKF…IVNC), 189–210 (NLVG…RICD), 213–235 (VLEY…IQKC), 237–258 (RLIL…AVLT), 261–283 (NITY…VDCS), 285–308 (SLEF…MGCK), 309–331 (SLKL…IGKM), 333–355 (SLSV…IGSL), 357–379 (FLQV…ISNC), 381–404 (VLLE…LNLT), 405–427 (NIKI…LGNL), 429–451 (KVQF…LGSL), and 453–475 (TLTH…PMIQ). A glycan (N-linked (GlcNAc...) asparagine) is linked at asparagine 121. N-linked (GlcNAc...) asparagine glycans are attached at residues asparagine 261 and asparagine 266. N-linked (GlcNAc...) asparagine glycans are attached at residues asparagine 321 and asparagine 341. Asparagine 402, asparagine 417, and asparagine 426 each carry an N-linked (GlcNAc...) asparagine glycan. N-linked (GlcNAc...) asparagine glycans are attached at residues asparagine 458 and asparagine 463. Residues 516–536 (VIIVIIAAAVILFGVCIVLAL) traverse the membrane as a helical segment. Over 537 to 882 (NLRARKRRKD…LESIRNGFGS (346 aa)) the chain is Cytoplasmic. The residue at position 589 (threonine 589) is a Phosphothreonine. One can recognise a Protein kinase domain in the interval 593–876 (LDKENIIGMG…AEVVQVLESI (284 aa)). Residues 599–607 (IGMGSIGSV) and lysine 621 contribute to the ATP site. Position 770 is a phosphotyrosine (tyrosine 770).

Belongs to the protein kinase superfamily. Ser/Thr protein kinase family.

Its subcellular location is the cell membrane. The catalysed reaction is L-seryl-[protein] + ATP = O-phospho-L-seryl-[protein] + ADP + H(+). It carries out the reaction L-threonyl-[protein] + ATP = O-phospho-L-threonyl-[protein] + ADP + H(+). The protein is Probable LRR receptor-like serine/threonine-protein kinase At1g12460 of Arabidopsis thaliana (Mouse-ear cress).